Consider the following 315-residue polypeptide: MLISQPPAIFLMGPTASGKTGLAVELVQAMPLEIISVDSALVYQDMDIGTAKPGQEVLQRAPHHLIDVIDPMQVYSAAQFREDALRLMADITARGKAPLLVGGTMLYFRTLEQGLGGLPEADAQVRAELDREAAKIGWPGMHAKLAAIDPETAARLQPADSQRIQRALEVYRLTGKSMTALHRQQAAEILPYRLLKIALQPSDRSVLHARIAERFVAMMKGGLLEEVQGLLKKYPGLHPDMTSMRCVGYRQTLEYLAGNIDDEAWKAQGIAATRQLAKRQLTWLRGMDDTLVLDCLEQDVYGQAQRAISGFLSAV.

13-20 (GPTASGKT) serves as a coordination point for ATP. 15–20 (TASGKT) contributes to the substrate binding site. Interaction with substrate tRNA regions lie at residues 38 to 41 (DSAL), 162 to 166 (QRIQR), and 245 to 250 (RCVGYR).

It belongs to the IPP transferase family. Monomer. Mg(2+) is required as a cofactor.

The enzyme catalyses adenosine(37) in tRNA + dimethylallyl diphosphate = N(6)-dimethylallyladenosine(37) in tRNA + diphosphate. Catalyzes the transfer of a dimethylallyl group onto the adenine at position 37 in tRNAs that read codons beginning with uridine, leading to the formation of N6-(dimethylallyl)adenosine (i(6)A). The chain is tRNA dimethylallyltransferase from Methylobacillus flagellatus (strain ATCC 51484 / DSM 6875 / VKM B-1610 / KT).